A 43-amino-acid polypeptide reads, in one-letter code: Potassium channel toxin gamma-KTx 3.2 (43 aa).

Disulfide bonds link Cys5/Cys23, Cys11/Cys34, Cys20/Cys39, and Cys24/Cys41.

The protein belongs to the ergtoxin family. Gamma-KTx 3 subfamily. Expressed by the venom gland.

The protein localises to the secreted. Functionally, blocks Kv11/ERG potassium channels. The chain is Potassium channel toxin gamma-KTx 3.2 from Centruroides elegans (Bark scorpion).